A 662-amino-acid polypeptide reads, in one-letter code: Zinc finger protein 17 (662 aa).

One can recognise a KRAB domain in the interval 8–101 (MVFEDVAIHF…LLKDILHLAE (94 aa)). C2H2-type zinc fingers lie at residues 190–212 (YSCTQCGKDFCHQHTLFEHQKIH), 218–240 (YECSECGKLFRYNSDLIKHQRNH), 246–268 (YKCSECGKAFSLKYNVVQHQKIH), 274–296 (YECSECGKAFLRKSHLLQHQRIH), 302–324 (YVCSECGKAFLTQAHLVGHQKIH), 358–380 (FYCCECGKFFMDSCTLIIHQRVH), 386–408 (YECNECGKFFRYRSTLIRHQKVH), 414–436 (YECSECGKFFMDTSTLIIHQRVH), 442–464 (YECNKCGKFFRYCFTLNRHQRVH), 470–492 (YECSECGKFFVDSCTLKSHQRVH), 498–520 (FECSICGKSFRCRSTLDTHQRIH), 526–548 (YECSECGKFFRHNSNHIRHRRNH), 554–576 (FECTECGRVFSQNSHLIRHQKVH), 582–604 (YKCSKCGKFFMDSSTLISHERVH), 610–632 (YECSECGKVFRYNSSLIKHRRIH), and 638–660 (YQCSECGRVFNQNSHLIQHQKVH).

Belongs to the krueppel C2H2-type zinc-finger protein family.

The protein resides in the nucleus. In terms of biological role, may be involved in transcriptional regulation. The sequence is that of Zinc finger protein 17 (ZNF17) from Homo sapiens (Human).